A 443-amino-acid polypeptide reads, in one-letter code: ATP-dependent protease ATPase subunit HslU (443 aa).

Residues I18, G60–E65, D256, E321, and R393 each bind ATP.

It belongs to the ClpX chaperone family. HslU subfamily. As to quaternary structure, a double ring-shaped homohexamer of HslV is capped on each side by a ring-shaped HslU homohexamer. The assembly of the HslU/HslV complex is dependent on binding of ATP.

It localises to the cytoplasm. Its function is as follows. ATPase subunit of a proteasome-like degradation complex; this subunit has chaperone activity. The binding of ATP and its subsequent hydrolysis by HslU are essential for unfolding of protein substrates subsequently hydrolyzed by HslV. HslU recognizes the N-terminal part of its protein substrates and unfolds these before they are guided to HslV for hydrolysis. The protein is ATP-dependent protease ATPase subunit HslU of Escherichia coli O17:K52:H18 (strain UMN026 / ExPEC).